The sequence spans 367 residues: ELAV-like protein 3 (367 aa).

3 consecutive RRM domains span residues 39–117 (TNLI…YARP), 125–205 (ANLY…FANN), and 284–362 (WCIF…FKTS).

It belongs to the RRM elav family. As to quaternary structure, interacts with MAP1B light chain LC1. In terms of tissue distribution, brain specific. Expressed in the hippocampus with expression in CA1, CA3 and dentate gyrus.

In terms of biological role, RNA-binding protein that binds to AU-rich element (ARE) sequences of target mRNAs, including VEGF mRNA. May also bind poly-A tracts via RRM 3. May be involved in neuronal differentiation and maintenance. Plays a role in the stabilization of GAP43 mRNA and in spatial learning. This Mus musculus (Mouse) protein is ELAV-like protein 3 (Elavl3).